The sequence spans 598 residues: DNA (cytosine-5)-methyltransferase DRM2 (598 aa).

Disordered regions lie at residues 1–49 and 114–146; these read MVDW…NGKA and EVDE…GDED. In terms of domain architecture, UBA 1 spans 42–91; it reads PQDANGKANGSGALVAEFMGMGFPKEMILKAIKEIGDTDTEQLLELLLTY. Residues 114-128 show a composition bias toward acidic residues; the sequence is EVDEEEDDTNWDEYD. Residues 150-194 enclose the UBA 2 domain; it reads EMSEKDEKMKSLVNMGFPEDEAKMAIDRCGLDAPVAVLVDSIYAS. The disordered stretch occupies residues 227-252; sequence GSKKRKRYGSGPSGNQVPFDGSHEEP. One can recognise an SAM-dependent MTase DRM-type domain in the interval 272–598; it reads VHRNLPDQAL…EHVKATMSAV (327 aa).

This sequence belongs to the class I-like SAM-binding methyltransferase superfamily. DRM-methyltransferase family. As to quaternary structure, interacts (via UBA domains) with EIF4A.

It is found in the nucleus. The catalysed reaction is a 2'-deoxycytidine in DNA + S-adenosyl-L-methionine = a 5-methyl-2'-deoxycytidine in DNA + S-adenosyl-L-homocysteine + H(+). Involved in de novo DNA methylation. Required for CpG and non-CpG methylation. Required for normal establishment and maintenance of RNA-directed DNA methylation (RdDM) mediated by small interfering RNAs (siRNAs). Regulates proper plant development in both vegetative and reproductive stages through DNA methylation. The sequence is that of DNA (cytosine-5)-methyltransferase DRM2 from Oryza sativa subsp. japonica (Rice).